A 254-amino-acid chain; its full sequence is MSGYDRALSIFSPDGHIFQVEYALEAVKRGTCAVGVKGKNCVVLGCERRSTLKLQDTRITPSKVSKIDSHVVLSFSGLNADSRILIEKARVEAQSHRLTLEDPVTVEYLTRYVAGVQQRYTQSGGVRPFGVSTLIAGFDPRDDEPKLYQTEPSGIYSSWSAQTIGRNSKTVREFLEKNYDRKEPPATVEECVKLTVRSLLEVVQTGAKNIEITVVKPDSDIVALSSEEINQYVTQIEQEKQEQQEQDKKKKSNH.

Thr60 is subject to Phosphothreonine. Positions 235-254 (QIEQEKQEQQEQDKKKKSNH) are disordered. Residues 237–248 (EQEKQEQQEQDK) are compositionally biased toward basic and acidic residues.

The protein belongs to the peptidase T1A family. The 26S proteasome consists of a 20S proteasome core and two 19S regulatory subunits. The 20S proteasome core is composed of 28 subunits that are arranged in four stacked rings, resulting in a barrel-shaped structure. The two end rings are each formed by seven alpha subunits, and the two central rings are each formed by seven beta subunits. The catalytic chamber with the active sites is on the inside of the barrel. Interacts with CIC1.

The protein localises to the cytoplasm. It is found in the nucleus. In terms of biological role, the proteasome degrades poly-ubiquitinated proteins in the cytoplasm and in the nucleus. It is essential for the regulated turnover of proteins and for the removal of misfolded proteins. The proteasome is a multicatalytic proteinase complex that is characterized by its ability to cleave peptides with Arg, Phe, Tyr, Leu, and Glu adjacent to the leaving group at neutral or slightly basic pH. It has an ATP-dependent proteolytic activity. This Saccharomyces cerevisiae (strain ATCC 204508 / S288c) (Baker's yeast) protein is Proteasome subunit alpha type-4 (PRE6).